Consider the following 396-residue polypeptide: Elongation factor Tu (396 aa).

One can recognise a tr-type G domain in the interval 10–206 (KPHVNVGTIG…ALDNYIPLPE (197 aa)). Residues 19–26 (GHVDHGKT) form a G1 region. 19–26 (GHVDHGKT) is a binding site for GTP. Residue T26 coordinates Mg(2+). Residues 60–64 (GITIN) are G2. Positions 81-84 (DCPG) are G3. Residues 81 to 85 (DCPGH) and 136 to 139 (NKCD) contribute to the GTP site. The interval 136 to 139 (NKCD) is G4. Residues 174-176 (SAK) form a G5 region.

It belongs to the TRAFAC class translation factor GTPase superfamily. Classic translation factor GTPase family. EF-Tu/EF-1A subfamily. Monomer.

The protein resides in the cytoplasm. The catalysed reaction is GTP + H2O = GDP + phosphate + H(+). In terms of biological role, GTP hydrolase that promotes the GTP-dependent binding of aminoacyl-tRNA to the A-site of ribosomes during protein biosynthesis. This is Elongation factor Tu from Polaromonas naphthalenivorans (strain CJ2).